Reading from the N-terminus, the 139-residue chain is Hydrogenase maturation factor HypA (139 aa).

Ni(2+)-binding residues include Met1 and His2. Zn(2+) is bound by residues Cys73 and Cys76. Ni(2+) is bound at residue His98. Residues Cys110 and Cys113 each contribute to the Zn(2+) site.

It belongs to the HypA/HybF family. Monomer and homodimer. Could also form hexamers. Forms a complex with HypB.

Its function is as follows. Involved in the maturation of [NiFe] hydrogenases. Required for nickel insertion into the metal center of the hydrogenase. The chain is Hydrogenase maturation factor HypA from Thermococcus kodakarensis (strain ATCC BAA-918 / JCM 12380 / KOD1) (Pyrococcus kodakaraensis (strain KOD1)).